The sequence spans 314 residues: Protein translocase subunit SecF (314 aa).

6 helical membrane-spanning segments follow: residues 17-37 (AVAV…TRGL), 137-157 (QGTY…WWRY), 158-178 (ELNF…ITLG), 188-210 (SLPV…IVVF), 250-270 (TLIV…GFAF), and 272-292 (LLVG…LLLV).

The protein belongs to the SecD/SecF family. SecF subfamily. In terms of assembly, forms a complex with SecD. Part of the essential Sec protein translocation apparatus which comprises SecA, SecYEG and auxiliary proteins SecDF. Other proteins may also be involved.

It localises to the cell inner membrane. Its function is as follows. Part of the Sec protein translocase complex. Interacts with the SecYEG preprotein conducting channel. SecDF uses the proton motive force (PMF) to complete protein translocation after the ATP-dependent function of SecA. This is Protein translocase subunit SecF from Desulfurispirillum indicum (strain ATCC BAA-1389 / DSM 22839 / S5).